Reading from the N-terminus, the 295-residue chain is Bifunctional protein FolD (295 aa).

NADP(+) is bound by residues 166–168, Ser-195, and Ile-236; that span reads GRS.

The protein belongs to the tetrahydrofolate dehydrogenase/cyclohydrolase family. As to quaternary structure, homodimer.

The enzyme catalyses (6R)-5,10-methylene-5,6,7,8-tetrahydrofolate + NADP(+) = (6R)-5,10-methenyltetrahydrofolate + NADPH. It carries out the reaction (6R)-5,10-methenyltetrahydrofolate + H2O = (6R)-10-formyltetrahydrofolate + H(+). Its pathway is one-carbon metabolism; tetrahydrofolate interconversion. Its function is as follows. Catalyzes the oxidation of 5,10-methylenetetrahydrofolate to 5,10-methenyltetrahydrofolate and then the hydrolysis of 5,10-methenyltetrahydrofolate to 10-formyltetrahydrofolate. In Pelodictyon phaeoclathratiforme (strain DSM 5477 / BU-1), this protein is Bifunctional protein FolD.